The sequence spans 397 residues: MVKETQYYDILGVKPSASPEEIKKAYRKLALKYHPDKNPDEGEKFKLISQAYEVLSDPKKRDIYDQGGEQAIKEGGSGSPSFSSPMDIFDMFFGGGGRMTRERRGKNVVHQLSVTLEDLYNGITKKLALQKNVICEKCEGIGGKKGSVEKCPLCKGRGMQVHIQQIGPGMVQQIQTVCIECKGQGERINPKDRCENCSGAKVTREKKIIEVHVEKGMKDGQKILFHGEGDQEPELDPGDVIIVLDQKDHSVFQRRGQDLIMKMKIQLSEALCGFKKTIKTLDDRVLVISSKSGEVIKHGDLKCIRNEGMPIYKAPLEKGVMIIQFLVVFPEKQWLSQEKLPQLEALLPPRQKVRITDDMDQVELKEFNPNEQSWRQHREAYEEDDEEPRAGVQCQTA.

Residues 4–70 enclose the J domain; the sequence is ETQYYDILGV…RDIYDQGGEQ (67 aa). S18 carries the post-translational modification Phosphoserine. Residues 122 to 206 form a CR-type zinc finger; that stretch reads GITKKLALQK…CSGAKVTREK (85 aa). 8 residues coordinate Zn(2+): C135, C138, C151, C154, C178, C181, C194, and C197. CXXCXGXG motif repeat units lie at residues 135-142, 151-158, 178-185, and 194-201; these read CEKCEGIG, CPLCKGRG, CIECKGQG, and CENCSGAK. Basic and acidic residues predominate over residues 366 to 380; the sequence is EFNPNEQSWRQHREA. The interval 366-397 is disordered; that stretch reads EFNPNEQSWRQHREAYEEDDEEPRAGVQCQTA. At C394 the chain carries Cysteine methyl ester. C394 is lipidated: S-farnesyl cysteine. The propeptide at 395-397 is removed in mature form; it reads QTA.

Specifically expressed in testis and heart.

The protein localises to the membrane. The sequence is that of DnaJ homolog subfamily A member 4 (Dnaja4) from Mus musculus (Mouse).